We begin with the raw amino-acid sequence, 959 residues long: Glutamate receptor 3.4 (959 aa).

Residues 1-35 (MGFLVMIREVSMAKAIRVVLLCVSVLWVVPKECAC) form the signal peptide. Topologically, residues 36–613 (RSNFSRNSSS…SPWSFLKPFT (578 aa)) are extracellular. N-linked (GlcNAc...) asparagine glycans are attached at residues Asn-38, Asn-42, Asn-108, Asn-365, Asn-378, Asn-404, Asn-443, Asn-461, and Asn-576. Residues 614–634 (IEMWAVTGGFFLFVGAMVWIL) traverse the membrane as a helical segment. Residues 635–643 (EHRFNQEFR) lie on the Cytoplasmic side of the membrane. The helical transmembrane segment at 644-664 (GPPRRQLITIFWFSFSTMFFS) threads the bilayer. Over 665-675 (HRENTVSSLGR) the chain is Cytoplasmic. A helical transmembrane segment spans residues 676-696 (FVLIIWLFVVLIINSSYTASL). Over 697 to 857 (TSILTIRQLT…SEDSQLSLKS (161 aa)) the chain is Extracellular. The chain crosses the membrane as a helical span at residues 858–878 (FWGLFLICGITCFMALTVFFW). At 879–959 (RVFWQYQRLL…TSQSQHGEIT (81 aa)) the chain is on the cytoplasmic side. Disordered regions lie at residues 893-913 (DEERAGEVSEPSRSGRGSRAP) and 936-959 (KSSKKLKSTQSAAGTSQSQHGEIT). Residues 943–959 (STQSAAGTSQSQHGEIT) show a composition bias toward low complexity.

Belongs to the glutamate-gated ion channel (TC 1.A.10.1) family. Forms a heteromeric channel with GLR3.2. As to expression, highly expressed in roots and at lower levels in leaves and siliques. Expressed in seedlings, cotyledons, roots (e.g. root hairs, epidermis and cortex cells), stems, leaves (e.g. vascular bundles and hydathodes), and siliques. Expressed in root phloem.

Its subcellular location is the cell membrane. It localises to the plastid. It is found in the chloroplast membrane. Glutamate-gated receptor that probably acts as a non-selective cation channel, at least in hypocotyls. Can be triggered by Asn, Ser, Gly and, to a lower extent, Ala, Cys and Glu. May be involved in light-signal transduction and calcium homeostasis via the regulation of calcium influx into cells. Plays an important role in the calcium-based fast transmission of environmental stress. Acts as a negative regulator of lateral root initiation and development. May restrict primordia numbers and position along the root axis by a signaling process originating in the phloem. AtGLR3.4-mediated cytosolic calcium influx may be involved in the regulation of seed germination under salt stress by modulating sodium accumulation through the SOS pathway. The chain is Glutamate receptor 3.4 from Arabidopsis thaliana (Mouse-ear cress).